Reading from the N-terminus, the 132-residue chain is uncharacterized protein (132 aa).

This is an uncharacterized protein from Archaeoglobus fulgidus (strain ATCC 49558 / DSM 4304 / JCM 9628 / NBRC 100126 / VC-16).